The primary structure comprises 229 residues: MKYLNQQEAISVDEELFNEYKFSVDQLMELAGLSCAHAIADAYSPDRSNKVLICCGPGNNGGDGLVAARHLSLMSFVPYVYYPKRTDKELFKNLQHQAESMGITVSVDCPAGEWVEAEFGLIVDALFGFSFKPPVRESFRPIMEVLQKTKLPIVSVDIPSGWDVELGPQTDCDIMPDCLISLTAPKLCAKHLVNAKHYLGGRFVPGKLEEKYAMNLPAYKGRDLFVRLS.

In terms of domain architecture, YjeF N-terminal spans 9-216; that stretch reads AISVDEELFN…KLEEKYAMNL (208 aa). 59–63 serves as a coordination point for (6S)-NADPHX; it reads NNGGD. Positions 60 and 124 each coordinate K(+). Residues 128-134 and Asp157 contribute to the (6S)-NADPHX site; that span reads GFSFKPP. Ser160 lines the K(+) pocket.

It belongs to the NnrE/AIBP family. It depends on K(+) as a cofactor.

It catalyses the reaction (6R)-NADHX = (6S)-NADHX. It carries out the reaction (6R)-NADPHX = (6S)-NADPHX. Its function is as follows. Catalyzes the epimerization of the S- and R-forms of NAD(P)HX, a damaged form of NAD(P)H that is a result of enzymatic or heat-dependent hydration. This is a prerequisite for the S-specific NAD(P)H-hydrate dehydratase to allow the repair of both epimers of NAD(P)HX. This Anopheles gambiae (African malaria mosquito) protein is NAD(P)H-hydrate epimerase.